Here is a 386-residue protein sequence, read N- to C-terminus: Protein phosphatase methylesterase 1 (386 aa).

The disordered stretch occupies residues 1 to 38; sequence MSALEKSMHLGRLPSRPPLPGSGGSQSGAKMRMGPGRK. S15 is modified (phosphoserine). R16 carries the post-translational modification Asymmetric dimethylarginine; alternate. Residue R16 is modified to Omega-N-methylarginine; alternate. Residues S156 and D181 contribute to the active site. A compositionally biased stretch (acidic residues) spans 255–265; it reads IEEEEEDEEGS. Residues 255 to 280 are disordered; it reads IEEEEEDEEGSESVNKRKKEDDMETK. Basic and acidic residues predominate over residues 268–280; the sequence is VNKRKKEDDMETK. The active site involves H349.

Belongs to the AB hydrolase superfamily. In terms of assembly, binds PPP2CA and PPP2CB. In terms of processing, phosphorylated by SIK1 following increases in intracellular sodium, leading to dissociation from the protein phosphatase 2A (PP2A) complex and subsequent dephosphorylation of sodium/potassium-transporting ATPase ATP1A1. In terms of tissue distribution, ubiquitous. Highly expressed in testis and brain.

It catalyses the reaction [phosphatase 2A protein]-C-terminal L-leucine methyl ester + H2O = [phosphatase 2A protein]-C-terminal L-leucine + methanol + H(+). Demethylates proteins that have been reversibly carboxymethylated. Demethylates PPP2CB (in vitro) and PPP2CA. Binding to PPP2CA displaces the manganese ion and inactivates the enzyme. The protein is Protein phosphatase methylesterase 1 (Ppme1) of Mus musculus (Mouse).